A 152-amino-acid polypeptide reads, in one-letter code: Glutamyl-tRNA(Gln) amidotransferase subunit F, mitochondrial (152 aa).

This sequence belongs to the GatF family. As to quaternary structure, subunit of the heterotrimeric GatFAB amidotransferase (AdT) complex, composed of A, B and F subunits.

Its subcellular location is the mitochondrion inner membrane. The catalysed reaction is L-glutamyl-tRNA(Gln) + L-glutamine + ATP + H2O = L-glutaminyl-tRNA(Gln) + L-glutamate + ADP + phosphate + H(+). Its function is as follows. Allows the formation of correctly charged Gln-tRNA(Gln) through the transamidation of misacylated Glu-tRNA(Gln) in the mitochondria. The reaction takes place in the presence of glutamine and ATP through an activated gamma-phospho-Glu-tRNA(Gln). Required for proper protein synthesis within the mitochondrion. In Komagataella phaffii (strain GS115 / ATCC 20864) (Yeast), this protein is Glutamyl-tRNA(Gln) amidotransferase subunit F, mitochondrial.